Here is a 428-residue protein sequence, read N- to C-terminus: Adenylosuccinate synthetase (428 aa).

Residues 12 to 18 (GDEGKGK) and 40 to 42 (GHT) each bind GTP. The active-site Proton acceptor is the Asp13. Positions 13 and 40 each coordinate Mg(2+). IMP is bound by residues 13–16 (DEGK), 38–41 (NAGH), Thr131, Arg145, Gln226, Thr241, and Arg305. His41 functions as the Proton donor in the catalytic mechanism. Substrate is bound at residue 301–307 (ATTGRKR). Residues Arg307, 333–335 (KLD), and 415–417 (SVG) contribute to the GTP site.

Belongs to the adenylosuccinate synthetase family. In terms of assembly, homodimer. Requires Mg(2+) as cofactor.

The protein resides in the cytoplasm. It carries out the reaction IMP + L-aspartate + GTP = N(6)-(1,2-dicarboxyethyl)-AMP + GDP + phosphate + 2 H(+). It functions in the pathway purine metabolism; AMP biosynthesis via de novo pathway; AMP from IMP: step 1/2. In terms of biological role, plays an important role in the de novo pathway of purine nucleotide biosynthesis. Catalyzes the first committed step in the biosynthesis of AMP from IMP. In Nitratidesulfovibrio vulgaris (strain DSM 19637 / Miyazaki F) (Desulfovibrio vulgaris), this protein is Adenylosuccinate synthetase.